A 160-amino-acid polypeptide reads, in one-letter code: Troponin C, skeletal muscle (160 aa).

The residue at position 2 (T2) is an N-acetylthreonine. 4 consecutive EF-hand domains span residues 15–50 (EMIA…LGQT), 51–86 (PTKE…QMKE), 91–126 (KSEE…SGEH), and 127–160 (VTDE…EGVQ). Ca(2+) contacts are provided by D28, D30, D34, E39, D64, D66, S68, T70, E75, D104, N106, D108, Y110, E115, D140, N142, D144, R146, and E151.

This sequence belongs to the troponin C family.

Its function is as follows. Troponin is the central regulatory protein of striated muscle contraction. Tn consists of three components: Tn-I which is the inhibitor of actomyosin ATPase, Tn-T which contains the binding site for tropomyosin and Tn-C. The binding of calcium to Tn-C abolishes the inhibitory action of Tn on actin filaments. The chain is Troponin C, skeletal muscle (TNNC2) from Oryctolagus cuniculus (Rabbit).